The primary structure comprises 320 residues: Cytochrome f (320 aa).

A signal peptide spans 1 to 35 (MQTRNAFSYIKEEITRSISVLLVIYIIIRAPISNA). Heme contacts are provided by Tyr-36, Cys-56, Cys-59, and His-60. Residues 286 to 305 (VQGLLFFLASIIFAQIFLVL) form a helical membrane-spanning segment.

It belongs to the cytochrome f family. In terms of assembly, the 4 large subunits of the cytochrome b6-f complex are cytochrome b6, subunit IV (17 kDa polypeptide, petD), cytochrome f and the Rieske protein, while the 4 small subunits are PetG, PetL, PetM and PetN. The complex functions as a dimer. Heme serves as cofactor.

It localises to the plastid. The protein resides in the chloroplast thylakoid membrane. Component of the cytochrome b6-f complex, which mediates electron transfer between photosystem II (PSII) and photosystem I (PSI), cyclic electron flow around PSI, and state transitions. This chain is Cytochrome f, found in Lotus japonicus (Lotus corniculatus var. japonicus).